The following is a 197-amino-acid chain: Holliday junction branch migration complex subunit RuvA (197 aa).

The domain I stretch occupies residues 1–63 (MIEFIRGYVD…EDVLALYGFH (63 aa)). The tract at residues 64–142 (TRQERMLFAK…AIVPDAFPNL (79 aa)) is domain II. The segment at 143–149 (FTEPLEE) is flexible linker. Residues 149–197 (ETNALSEAIEALKALGYADKEIQKVVPMLRQERLSTEGYIKLALQKLLK) form a domain III region.

The protein belongs to the RuvA family. As to quaternary structure, homotetramer. Forms an RuvA(8)-RuvB(12)-Holliday junction (HJ) complex. HJ DNA is sandwiched between 2 RuvA tetramers; dsDNA enters through RuvA and exits via RuvB. An RuvB hexamer assembles on each DNA strand where it exits the tetramer. Each RuvB hexamer is contacted by two RuvA subunits (via domain III) on 2 adjacent RuvB subunits; this complex drives branch migration. In the full resolvosome a probable DNA-RuvA(4)-RuvB(12)-RuvC(2) complex forms which resolves the HJ.

It is found in the cytoplasm. In terms of biological role, the RuvA-RuvB-RuvC complex processes Holliday junction (HJ) DNA during genetic recombination and DNA repair, while the RuvA-RuvB complex plays an important role in the rescue of blocked DNA replication forks via replication fork reversal (RFR). RuvA specifically binds to HJ cruciform DNA, conferring on it an open structure. The RuvB hexamer acts as an ATP-dependent pump, pulling dsDNA into and through the RuvAB complex. HJ branch migration allows RuvC to scan DNA until it finds its consensus sequence, where it cleaves and resolves the cruciform DNA. This is Holliday junction branch migration complex subunit RuvA from Anoxybacillus flavithermus (strain DSM 21510 / WK1).